A 212-amino-acid chain; its full sequence is uncharacterized protein (212 aa).

The S-adenosyl-L-methionine site is built by Gly-53 and Glu-74.

It belongs to the methyltransferase superfamily. YrrT family.

Functionally, could be a S-adenosyl-L-methionine-dependent methyltransferase. This is an uncharacterized protein from Exiguobacterium sibiricum (strain DSM 17290 / CCUG 55495 / CIP 109462 / JCM 13490 / 255-15).